Consider the following 502-residue polypeptide: Aspartyl/glutamyl-tRNA(Asn/Gln) amidotransferase subunit B (502 aa).

The protein belongs to the GatB/GatE family. GatB subfamily. In terms of assembly, heterotrimer of A, B and C subunits.

It catalyses the reaction L-glutamyl-tRNA(Gln) + L-glutamine + ATP + H2O = L-glutaminyl-tRNA(Gln) + L-glutamate + ADP + phosphate + H(+). It carries out the reaction L-aspartyl-tRNA(Asn) + L-glutamine + ATP + H2O = L-asparaginyl-tRNA(Asn) + L-glutamate + ADP + phosphate + 2 H(+). In terms of biological role, allows the formation of correctly charged Asn-tRNA(Asn) or Gln-tRNA(Gln) through the transamidation of misacylated Asp-tRNA(Asn) or Glu-tRNA(Gln) in organisms which lack either or both of asparaginyl-tRNA or glutaminyl-tRNA synthetases. The reaction takes place in the presence of glutamine and ATP through an activated phospho-Asp-tRNA(Asn) or phospho-Glu-tRNA(Gln). This Ruegeria sp. (strain TM1040) (Silicibacter sp.) protein is Aspartyl/glutamyl-tRNA(Asn/Gln) amidotransferase subunit B.